A 173-amino-acid chain; its full sequence is NADH-ubiquinone oxidoreductase chain 6 (173 aa).

Transmembrane regions (helical) follow at residues 1–21 (MTYF…GVAS), 27–47 (YGVV…LSLG), 48–68 (VSFV…VVFV), 87–107 (VVGY…IGGL), and 139–159 (CGVG…FVVL).

It belongs to the complex I subunit 6 family.

It is found in the mitochondrion membrane. The enzyme catalyses a ubiquinone + NADH + 5 H(+)(in) = a ubiquinol + NAD(+) + 4 H(+)(out). Core subunit of the mitochondrial membrane respiratory chain NADH dehydrogenase (Complex I) that is believed to belong to the minimal assembly required for catalysis. Complex I functions in the transfer of electrons from NADH to the respiratory chain. The immediate electron acceptor for the enzyme is believed to be ubiquinone. The polypeptide is NADH-ubiquinone oxidoreductase chain 6 (MT-ND6) (Synthliboramphus hypoleucus (Guadalupe murrelet)).